Here is a 508-residue protein sequence, read N- to C-terminus: Maturase K (508 aa).

This sequence belongs to the intron maturase 2 family. MatK subfamily.

Its subcellular location is the plastid. The protein localises to the chloroplast. Functionally, usually encoded in the trnK tRNA gene intron. Probably assists in splicing its own and other chloroplast group II introns. The protein is Maturase K of Collinsia heterophylla (Purple Chinese houses).